The following is a 207-amino-acid chain: 23 kDa calcium-binding protein (207 aa).

M1 carries the blocked amino end (Met) modification. EF-hand domains are found at residues 17-52 (AKLD…TFEN), 60-95 (VTAD…CLKK), 119-154 (MKLD…TYKQ), and 161-196 (PTEA…GLKK). Positions 30, 32, 34, 36, 41, 73, 75, 77, 84, 132, 134, 136, 138, 143, 174, 176, 178, 180, and 185 each coordinate Ca(2+).

Expected to play a crucial role in calcium-dependent regulation of ciliary movement. In Tetrahymena thermophila, this protein is 23 kDa calcium-binding protein.